We begin with the raw amino-acid sequence, 325 residues long: Beta-ketoacyl-[acyl-carrier-protein] synthase III (325 aa).

Active-site residues include Cys-119 and His-252. An ACP-binding region spans residues 253–257 (QANIR). Residue Asn-282 is part of the active site.

It belongs to the thiolase-like superfamily. FabH family. Homodimer.

Its subcellular location is the cytoplasm. The enzyme catalyses malonyl-[ACP] + acetyl-CoA + H(+) = 3-oxobutanoyl-[ACP] + CO2 + CoA. It functions in the pathway lipid metabolism; fatty acid biosynthesis. In terms of biological role, catalyzes the condensation reaction of fatty acid synthesis by the addition to an acyl acceptor of two carbons from malonyl-ACP. Catalyzes the first condensation reaction which initiates fatty acid synthesis and may therefore play a role in governing the total rate of fatty acid production. Possesses both acetoacetyl-ACP synthase and acetyl transacylase activities. Its substrate specificity determines the biosynthesis of branched-chain and/or straight-chain of fatty acids. The protein is Beta-ketoacyl-[acyl-carrier-protein] synthase III of Delftia acidovorans (strain DSM 14801 / SPH-1).